The primary structure comprises 1062 residues: Carbamoyl phosphate synthase pyrimidine-specific large chain (1062 aa).

Residues 1-401 (MGKREDIKKI…SLLKAVRSLE (401 aa)) are carboxyphosphate synthetic domain. The ATP site is built by R129, R169, G175, G176, K208, I210, E215, G241, V242, H243, Q284, and E298. The ATP-grasp 1 domain maps to 133-327 (RALMKELNEP…IAKIAAKIAV (195 aa)). The Mg(2+) site is built by Q284, E298, and N300. Residues Q284, E298, and N300 each coordinate Mn(2+). The oligomerization domain stretch occupies residues 402–546 (AGVYHLDQPD…YGTYEEENES (145 aa)). The segment at 547–929 (ERTDKKSILV…ALYKGLIASG (383 aa)) is carbamoyl phosphate synthetic domain. The ATP-grasp 2 domain occupies 671–861 (EQTLVELNIP…MANVATKVML (191 aa)). ATP-binding residues include R707, R746, L748, E752, G777, V778, H779, S780, Q820, and E832. Mg(2+) contacts are provided by Q820, E832, and N834. Residues Q820, E832, and N834 each contribute to the Mn(2+) site. The region spanning 930 to 1062 (MSIPTHGSVL…FSAESMPVMQ (133 aa)) is the MGS-like domain. The segment at 930 to 1062 (MSIPTHGSVL…FSAESMPVMQ (133 aa)) is allosteric domain.

The protein belongs to the CarB family. In terms of assembly, composed of two chains; the small (or glutamine) chain promotes the hydrolysis of glutamine to ammonia, which is used by the large (or ammonia) chain to synthesize carbamoyl phosphate. Tetramer of heterodimers (alpha,beta)4. Mg(2+) is required as a cofactor. Requires Mn(2+) as cofactor.

The enzyme catalyses hydrogencarbonate + L-glutamine + 2 ATP + H2O = carbamoyl phosphate + L-glutamate + 2 ADP + phosphate + 2 H(+). The catalysed reaction is hydrogencarbonate + NH4(+) + 2 ATP = carbamoyl phosphate + 2 ADP + phosphate + 2 H(+). It participates in amino-acid biosynthesis; L-arginine biosynthesis; carbamoyl phosphate from bicarbonate: step 1/1. The protein operates within pyrimidine metabolism; UMP biosynthesis via de novo pathway; (S)-dihydroorotate from bicarbonate: step 1/3. In terms of biological role, small subunit of the glutamine-dependent carbamoyl phosphate synthetase (CPSase). CPSase catalyzes the formation of carbamoyl phosphate from the ammonia moiety of glutamine, carbonate, and phosphate donated by ATP, constituting the first step of the biosynthetic pathway leading to pyrimidine nucleotides. The large subunit (synthetase) binds the substrates ammonia (free or transferred from glutamine from the small subunit), hydrogencarbonate and ATP and carries out an ATP-coupled ligase reaction, activating hydrogencarbonate by forming carboxy phosphate which reacts with ammonia to form carbamoyl phosphate. In Halalkalibacterium halodurans (strain ATCC BAA-125 / DSM 18197 / FERM 7344 / JCM 9153 / C-125) (Bacillus halodurans), this protein is Carbamoyl phosphate synthase pyrimidine-specific large chain (pyrAB).